A 433-amino-acid chain; its full sequence is 3-phosphoshikimate 1-carboxyvinyltransferase (433 aa).

Positions 21, 22, and 26 each coordinate 3-phosphoshikimate. K21 provides a ligand contact to phosphoenolpyruvate. Phosphoenolpyruvate-binding residues include G92 and R120. Residues S166, Q168, D317, and K344 each coordinate 3-phosphoshikimate. Q168 contacts phosphoenolpyruvate. Residue D317 is the Proton acceptor of the active site. Phosphoenolpyruvate is bound by residues R348 and R391.

The protein belongs to the EPSP synthase family. Monomer.

The protein resides in the cytoplasm. The enzyme catalyses 3-phosphoshikimate + phosphoenolpyruvate = 5-O-(1-carboxyvinyl)-3-phosphoshikimate + phosphate. Its pathway is metabolic intermediate biosynthesis; chorismate biosynthesis; chorismate from D-erythrose 4-phosphate and phosphoenolpyruvate: step 6/7. In terms of biological role, catalyzes the transfer of the enolpyruvyl moiety of phosphoenolpyruvate (PEP) to the 5-hydroxyl of shikimate-3-phosphate (S3P) to produce enolpyruvyl shikimate-3-phosphate and inorganic phosphate. This Caldicellulosiruptor saccharolyticus (strain ATCC 43494 / DSM 8903 / Tp8T 6331) protein is 3-phosphoshikimate 1-carboxyvinyltransferase.